Here is a 242-residue protein sequence, read N- to C-terminus: MNTEKPSVAHNVDHNEIAKFEAVASRWWDLEGEFKPLHRINPLRLGYITERSGGLFGKKVLDVGCGGGILAESMAREGATVTGLDMGFEPLQVAKLRALESGIEVEYVQETVEEHAAKHAQQYDVVTCMEMLEHVPDPQSVVHACAQLVKPDGEVFFSTLNRNGKSWLMAVVGAEYILRMVPKGTHDVKKFIKPAELLSWVDETVLKEQHITGLHYNPITNTFKLGPGVDVNYMLHTRAKKA.

Residues R44, G64, D85, and M129 each contribute to the S-adenosyl-L-methionine site.

The protein belongs to the methyltransferase superfamily. UbiG/COQ3 family.

The enzyme catalyses a 3-demethylubiquinol + S-adenosyl-L-methionine = a ubiquinol + S-adenosyl-L-homocysteine + H(+). The catalysed reaction is a 3-(all-trans-polyprenyl)benzene-1,2-diol + S-adenosyl-L-methionine = a 2-methoxy-6-(all-trans-polyprenyl)phenol + S-adenosyl-L-homocysteine + H(+). It functions in the pathway cofactor biosynthesis; ubiquinone biosynthesis. O-methyltransferase that catalyzes the 2 O-methylation steps in the ubiquinone biosynthetic pathway. This is Ubiquinone biosynthesis O-methyltransferase from Salmonella paratyphi A (strain ATCC 9150 / SARB42).